A 294-amino-acid polypeptide reads, in one-letter code: Cytidine deaminase (294 aa).

CMP/dCMP-type deaminase domains lie at 48–168 and 186–294; these read DEDA…FGPK and LTGD…VLLG. Residue 89–91 participates in substrate binding; that stretch reads NME. His102 is a binding site for Zn(2+). Residue Glu104 is the Proton donor of the active site. Zn(2+) contacts are provided by Cys129 and Cys132.

This sequence belongs to the cytidine and deoxycytidylate deaminase family. As to quaternary structure, homodimer. Requires Zn(2+) as cofactor.

The catalysed reaction is cytidine + H2O + H(+) = uridine + NH4(+). It catalyses the reaction 2'-deoxycytidine + H2O + H(+) = 2'-deoxyuridine + NH4(+). In terms of biological role, this enzyme scavenges exogenous and endogenous cytidine and 2'-deoxycytidine for UMP synthesis. The sequence is that of Cytidine deaminase from Salmonella paratyphi A (strain ATCC 9150 / SARB42).